The sequence spans 447 residues: N-succinylarginine dihydrolase (447 aa).

Substrate is bound by residues 19 to 28 (AGLSFGNEAS), Asn110, and 137 to 138 (HR). Glu174 is a catalytic residue. Arg214 lines the substrate pocket. The active site involves His250. The substrate site is built by Asp252 and Asn365. Catalysis depends on Cys371, which acts as the Nucleophile.

The protein belongs to the succinylarginine dihydrolase family. Homodimer.

It catalyses the reaction N(2)-succinyl-L-arginine + 2 H2O + 2 H(+) = N(2)-succinyl-L-ornithine + 2 NH4(+) + CO2. Its pathway is amino-acid degradation; L-arginine degradation via AST pathway; L-glutamate and succinate from L-arginine: step 2/5. Functionally, catalyzes the hydrolysis of N(2)-succinylarginine into N(2)-succinylornithine, ammonia and CO(2). This chain is N-succinylarginine dihydrolase, found in Acinetobacter baumannii (strain SDF).